Consider the following 638-residue polypeptide: 1-deoxy-D-xylulose-5-phosphate synthase (638 aa).

Thiamine diphosphate is bound by residues His-71 and 112–114 (SHA). Asp-144 contacts Mg(2+). Residues 145–146 (GA), Asn-173, Tyr-284, and Glu-365 each bind thiamine diphosphate. Asn-173 is a binding site for Mg(2+).

This sequence belongs to the transketolase family. DXPS subfamily. As to quaternary structure, homodimer. Requires Mg(2+) as cofactor. Thiamine diphosphate is required as a cofactor.

The catalysed reaction is D-glyceraldehyde 3-phosphate + pyruvate + H(+) = 1-deoxy-D-xylulose 5-phosphate + CO2. The protein operates within metabolic intermediate biosynthesis; 1-deoxy-D-xylulose 5-phosphate biosynthesis; 1-deoxy-D-xylulose 5-phosphate from D-glyceraldehyde 3-phosphate and pyruvate: step 1/1. Catalyzes the acyloin condensation reaction between C atoms 2 and 3 of pyruvate and glyceraldehyde 3-phosphate to yield 1-deoxy-D-xylulose-5-phosphate (DXP). This chain is 1-deoxy-D-xylulose-5-phosphate synthase, found in Mycobacterium sp. (strain JLS).